The sequence spans 702 residues: Ferrioxamine B receptor (702 aa).

The N-terminal stretch at 1–30 (MPLEMFMFATTRMALLIGGAIGGATFPLFA) is a signal peptide. Positions 55–168 (PDIETPQSVS…PGGIVALTSR (114 aa)) constitute a TBDR plug domain. The region spanning 173–702 (DAGGEVKLFA…SIVGSVSWAF (530 aa)) is the TBDR beta-barrel domain.

This sequence belongs to the TonB-dependent receptor family.

The protein resides in the cell outer membrane. Its function is as follows. Ferrioxamine binding and uptake, in association with the TonB protein. May play a role in intestinal colonization. In Salmonella typhimurium (strain SL1344), this protein is Ferrioxamine B receptor (foxA).